A 291-amino-acid chain; its full sequence is Protease HtpX (291 aa).

The next 2 helical transmembrane spans lie at 4 to 24 (ILLF…TLKL) and 36 to 56 (GSLL…SLFI). His142 serves as a coordination point for Zn(2+). Glu143 is a catalytic residue. His146 lines the Zn(2+) pocket. The next 2 helical transmembrane spans lie at 150–170 (GDMV…MFFA) and 193–213 (FVAT…IVMW). Glu219 provides a ligand contact to Zn(2+).

The protein belongs to the peptidase M48B family. Zn(2+) serves as cofactor.

The protein localises to the cell inner membrane. In Pseudomonas aeruginosa (strain LESB58), this protein is Protease HtpX.